We begin with the raw amino-acid sequence, 436 residues long: Adenylyltransferase and sulfurtransferase UBA4 (436 aa).

Residues glycine 74, aspartate 95, 102–106, lysine 119, and 163–164 contribute to the ATP site; these read SNLHR and DT. Zn(2+)-binding residues include cysteine 205 and cysteine 208. Cysteine 222 (glycyl thioester intermediate; for adenylyltransferase activity) is an active-site residue. Residues cysteine 283 and cysteine 286 each contribute to the Zn(2+) site. Residues 335 to 434 form the Rhodanese domain; that stretch reads NEKDHILIDV…YIDEEDHSYP (100 aa). Cysteine 393 serves as the catalytic Cysteine persulfide intermediate; for sulfurtransferase activity.

The protein in the N-terminal section; belongs to the HesA/MoeB/ThiF family. UBA4 subfamily. Zn(2+) serves as cofactor.

Its subcellular location is the cytoplasm. It is found in the cytosol. Its pathway is tRNA modification; 5-methoxycarbonylmethyl-2-thiouridine-tRNA biosynthesis. In terms of biological role, plays a central role in 2-thiolation of mcm(5)S(2)U at tRNA wobble positions of cytosolic tRNA(Lys), tRNA(Glu) and tRNA(Gln). Acts by mediating the C-terminal thiocarboxylation of sulfur carrier URM1. Its N-terminus first activates URM1 as acyl-adenylate (-COAMP), then the persulfide sulfur on the catalytic cysteine is transferred to URM1 to form thiocarboxylation (-COSH) of its C-terminus. The reaction probably involves hydrogen sulfide that is generated from the persulfide intermediate and that acts as a nucleophile towards URM1. Subsequently, a transient disulfide bond is formed. Does not use thiosulfate as sulfur donor; NFS1 probably acting as a sulfur donor for thiocarboxylation reactions. Prior mcm(5) tRNA modification by the elongator complex is required for 2-thiolation. May also be involved in protein urmylation. This Vanderwaltozyma polyspora (strain ATCC 22028 / DSM 70294 / BCRC 21397 / CBS 2163 / NBRC 10782 / NRRL Y-8283 / UCD 57-17) (Kluyveromyces polysporus) protein is Adenylyltransferase and sulfurtransferase UBA4.